The primary structure comprises 155 residues: MALYAIFRVRGRVDVRKDIEDTLKLLRVHRKNYLSIMPKTESIEGMIQKAKDYITWGEIDEKTLAELLKKRGRISRRKKLTLEYIKEKGFNSFEELAKALIEGKVTLKELGIKPFFRLRPPSKGYGKKGIKKHFNEGGALGYRGEKINDLILRAI.

It belongs to the universal ribosomal protein uL30 family. As to quaternary structure, part of the 50S ribosomal subunit.

This is Large ribosomal subunit protein uL30 from Nanoarchaeum equitans (strain Kin4-M).